Here is a 323-residue protein sequence, read N- to C-terminus: NADH-ubiquinone oxidoreductase chain 1 (323 aa).

8 helical membrane-spanning segments follow: residues isoleucine 9–isoleucine 29, leucine 76–methionine 96, isoleucine 107–alanine 127, isoleucine 145–phenylalanine 165, glutamate 175–leucine 195, leucine 227–phenylalanine 247, glutamate 258–valine 278, and phenylalanine 298–glycine 318.

It belongs to the complex I subunit 1 family.

It is found in the mitochondrion inner membrane. It catalyses the reaction a ubiquinone + NADH + 5 H(+)(in) = a ubiquinol + NAD(+) + 4 H(+)(out). Functionally, core subunit of the mitochondrial membrane respiratory chain NADH dehydrogenase (Complex I) that is believed to belong to the minimal assembly required for catalysis. Complex I functions in the transfer of electrons from NADH to the respiratory chain. The immediate electron acceptor for the enzyme is believed to be ubiquinone. This is NADH-ubiquinone oxidoreductase chain 1 (MT-ND1) from Gadus morhua (Atlantic cod).